A 268-amino-acid chain; its full sequence is Tryptophan synthase alpha chain (268 aa).

Catalysis depends on proton acceptor residues glutamate 47 and aspartate 58.

Belongs to the TrpA family. In terms of assembly, tetramer of two alpha and two beta chains.

Its subcellular location is the plastid. The protein resides in the chloroplast. It catalyses the reaction (1S,2R)-1-C-(indol-3-yl)glycerol 3-phosphate + L-serine = D-glyceraldehyde 3-phosphate + L-tryptophan + H2O. Its pathway is amino-acid biosynthesis; L-tryptophan biosynthesis; L-tryptophan from chorismate: step 5/5. Functionally, the alpha subunit is responsible for the aldol cleavage of indoleglycerol phosphate to indole and glyceraldehyde 3-phosphate. The sequence is that of Tryptophan synthase alpha chain from Gracilaria tenuistipitata var. liui (Red alga).